The chain runs to 630 residues: tRNA uridine 5-carboxymethylaminomethyl modification enzyme MnmG (630 aa).

13–18 (GGGHAG) is a binding site for FAD. 273 to 287 (GPRYCPSIEDKVNRF) is a binding site for NAD(+).

It belongs to the MnmG family. As to quaternary structure, homodimer. Heterotetramer of two MnmE and two MnmG subunits. It depends on FAD as a cofactor.

Its subcellular location is the cytoplasm. NAD-binding protein involved in the addition of a carboxymethylaminomethyl (cmnm) group at the wobble position (U34) of certain tRNAs, forming tRNA-cmnm(5)s(2)U34. The sequence is that of tRNA uridine 5-carboxymethylaminomethyl modification enzyme MnmG from Teredinibacter turnerae (strain ATCC 39867 / T7901).